The following is a 172-amino-acid chain: Shikimate kinase (172 aa).

Residue 11–16 coordinates ATP; it reads GTGKTA. Residue threonine 15 coordinates Mg(2+). Residues aspartate 33, arginine 57, and glycine 79 each contribute to the substrate site. Arginine 117 serves as a coordination point for ATP. Arginine 136 serves as a coordination point for substrate.

This sequence belongs to the shikimate kinase family. In terms of assembly, monomer. It depends on Mg(2+) as a cofactor.

It localises to the cytoplasm. The enzyme catalyses shikimate + ATP = 3-phosphoshikimate + ADP + H(+). Its pathway is metabolic intermediate biosynthesis; chorismate biosynthesis; chorismate from D-erythrose 4-phosphate and phosphoenolpyruvate: step 5/7. Functionally, catalyzes the specific phosphorylation of the 3-hydroxyl group of shikimic acid using ATP as a cosubstrate. In Pelotomaculum thermopropionicum (strain DSM 13744 / JCM 10971 / SI), this protein is Shikimate kinase.